Consider the following 498-residue polypeptide: Hexokinase-1 (498 aa).

Residues valine 4–valine 24 traverse the membrane as a helical segment. The Hexokinase domain occupies glycine 35–alanine 488. The segment at glutamine 89 to valine 228 is hexokinase small subdomain. Residues glycine 104, threonine 105, and asparagine 106 each coordinate ADP. D-glucose-binding residues include threonine 194, lysine 195, asparagine 229, and aspartate 230. Positions asparagine 229 to aspartate 477 are hexokinase large subdomain. Threonine 253 is an ADP binding site. The D-glucose site is built by asparagine 256, glutamate 284, and glutamate 315. An ADP-binding site is contributed by glycine 442.

It belongs to the hexokinase family. As to expression, expressed in young and mature leaves, stems, roots, stolons, and developing and mature tubers.

Its subcellular location is the plastid. It localises to the chloroplast outer membrane. The catalysed reaction is a D-hexose + ATP = a D-hexose 6-phosphate + ADP + H(+). The enzyme catalyses D-fructose + ATP = D-fructose 6-phosphate + ADP + H(+). It catalyses the reaction D-glucose + ATP = D-glucose 6-phosphate + ADP + H(+). It participates in carbohydrate metabolism; hexose metabolism. Its pathway is carbohydrate degradation; glycolysis; D-glyceraldehyde 3-phosphate and glycerone phosphate from D-glucose: step 1/4. Functionally, fructose and glucose phosphorylating enzyme. May be involved in the phosphorylation of glucose during the export from plastids to cytosol. Seems neither to be involved in cell sugar sensing nor in carbohydrate metabolism in tuber. This is Hexokinase-1 (HXK1) from Solanum tuberosum (Potato).